A 67-amino-acid polypeptide reads, in one-letter code: Probable tautomerase bsl7456 (67 aa).

Proline 2 serves as the catalytic Proton acceptor; via imino nitrogen.

This sequence belongs to the 4-oxalocrotonate tautomerase family.

The polypeptide is Probable tautomerase bsl7456 (Bradyrhizobium diazoefficiens (strain JCM 10833 / BCRC 13528 / IAM 13628 / NBRC 14792 / USDA 110)).